Consider the following 869-residue polypeptide: Protein translocase subunit SecA (869 aa).

ATP is bound by residues Q85, 103–107 (GEGKT), and D508.

Belongs to the SecA family. In terms of assembly, monomer and homodimer. Part of the essential Sec protein translocation apparatus which comprises SecA, SecYEG and auxiliary proteins SecDF. Other proteins may also be involved.

The protein localises to the cell membrane. Its subcellular location is the cytoplasm. The catalysed reaction is ATP + H2O + cellular proteinSide 1 = ADP + phosphate + cellular proteinSide 2.. Its function is as follows. Part of the Sec protein translocase complex. Interacts with the SecYEG preprotein conducting channel. Has a central role in coupling the hydrolysis of ATP to the transfer of proteins into and across the cell membrane, serving as an ATP-driven molecular motor driving the stepwise translocation of polypeptide chains across the membrane. The protein is Protein translocase subunit SecA of Deinococcus deserti (strain DSM 17065 / CIP 109153 / LMG 22923 / VCD115).